The chain runs to 340 residues: DNA-directed RNA polymerase subunit alpha (340 aa).

The interval 1–236 (MLSLSKNWNT…EQLQLFISFE (236 aa)) is alpha N-terminal domain (alpha-NTD). The segment at 251-340 (FSPYLLKRVD…LSKRYEDSYN (90 aa)) is alpha C-terminal domain (alpha-CTD).

Belongs to the RNA polymerase alpha chain family. Homodimer. The RNAP catalytic core consists of 2 alpha, 1 beta, 1 beta' and 1 omega subunit. When a sigma factor is associated with the core the holoenzyme is formed, which can initiate transcription.

The enzyme catalyses RNA(n) + a ribonucleoside 5'-triphosphate = RNA(n+1) + diphosphate. In terms of biological role, DNA-dependent RNA polymerase catalyzes the transcription of DNA into RNA using the four ribonucleoside triphosphates as substrates. This Rickettsia akari (strain Hartford) protein is DNA-directed RNA polymerase subunit alpha.